Here is an 80-residue protein sequence, read N- to C-terminus: Protein pegasus (80 aa).

The signal sequence occupies residues Met-1–Gly-22. Positions Pro-24–Pro-80 constitute a Kazal-like domain. Disulfide bonds link Cys-30–Cys-65, Cys-34–Cys-58, and Cys-43–Cys-79.

As to quaternary structure, interacts with wg; the interaction facilitates short-range diffusion of wg. In terms of tissue distribution, strongly expressed in the developing fly wing but is excluded from the presumptive wing margin.

It localises to the secreted. Functionally, increases short-range diffusion of the wingless/wg protein, enhancing its signaling and expression of target genes required for wing margin morphogenesis. May act as a serine protease inhibitor since it possess the Kazal serine protease inhibitor signature. In Drosophila melanogaster (Fruit fly), this protein is Protein pegasus.